The sequence spans 251 residues: Hydroxyacylglutathione hydrolase (251 aa).

Residues histidine 53, histidine 55, aspartate 57, histidine 58, histidine 110, aspartate 127, and histidine 165 each contribute to the Zn(2+) site.

It belongs to the metallo-beta-lactamase superfamily. Glyoxalase II family. In terms of assembly, monomer. The cofactor is Zn(2+).

It carries out the reaction an S-(2-hydroxyacyl)glutathione + H2O = a 2-hydroxy carboxylate + glutathione + H(+). Its pathway is secondary metabolite metabolism; methylglyoxal degradation; (R)-lactate from methylglyoxal: step 2/2. Functionally, thiolesterase that catalyzes the hydrolysis of S-D-lactoyl-glutathione to form glutathione and D-lactic acid. The polypeptide is Hydroxyacylglutathione hydrolase (Shigella boydii serotype 4 (strain Sb227)).